A 567-amino-acid polypeptide reads, in one-letter code: Urease subunit alpha (567 aa).

A Urease domain is found at 129 to 567 (GGVDTHIHFI…LPMAQRYFLF (439 aa)). Residues His134, His136, and Lys217 each contribute to the Ni(2+) site. Lys217 carries the post-translational modification N6-carboxylysine. His219 contacts substrate. The Ni(2+) site is built by His246 and His272. The active-site Proton donor is His320. Asp360 is a binding site for Ni(2+).

It belongs to the metallo-dependent hydrolases superfamily. Urease alpha subunit family. Heterotrimer of UreA (gamma), UreB (beta) and UreC (alpha) subunits. Three heterotrimers associate to form the active enzyme. The cofactor is Ni cation. Post-translationally, carboxylation allows a single lysine to coordinate two nickel ions.

The protein localises to the cytoplasm. The enzyme catalyses urea + 2 H2O + H(+) = hydrogencarbonate + 2 NH4(+). Its pathway is nitrogen metabolism; urea degradation; CO(2) and NH(3) from urea (urease route): step 1/1. The sequence is that of Urease subunit alpha from Proteus hauseri.